We begin with the raw amino-acid sequence, 355 residues long: Protein RecA (355 aa).

Position 72–79 (72–79) interacts with ATP; the sequence is GPESSGKT.

Belongs to the RecA family.

The protein localises to the cytoplasm. In terms of biological role, can catalyze the hydrolysis of ATP in the presence of single-stranded DNA, the ATP-dependent uptake of single-stranded DNA by duplex DNA, and the ATP-dependent hybridization of homologous single-stranded DNAs. It interacts with LexA causing its activation and leading to its autocatalytic cleavage. The sequence is that of Protein RecA from Thermosynechococcus vestitus (strain NIES-2133 / IAM M-273 / BP-1).